We begin with the raw amino-acid sequence, 145 residues long: Mitochondrial import receptor subunit TOM20 homolog (145 aa).

The Mitochondrial intermembrane segment spans residues 1–6; sequence MVGRNS. Residues 7–24 form a helical membrane-spanning segment; sequence AIAAGVCGALFIGYCIYF. The Cytoplasmic segment spans residues 25–145; that stretch reads DRKRRSDPNF…AQSLAEDDVE (121 aa). Residues Lys35, Lys56, Lys61, and Lys68 each participate in a glycyl lysine isopeptide (Lys-Gly) (interchain with G-Cter in ubiquitin) cross-link. Phosphoserine occurs at positions 135 and 138.

It belongs to the Tom20 family. In terms of assembly, forms part of the preprotein translocase complex of the outer mitochondrial membrane (TOM complex) which consists of at least 7 different proteins (TOMM5, TOMM6, TOMM7, TOMM20, TOMM22, TOMM40 and TOMM70). Interacts with TOM22. Interacts with APEX1. Interacts with TBC1D21. Upon mitochondrial depolarization, interacts with PINK1; the interaction is required for PINK1-TOM-TIM23 supercomplex formation which is critical for PINK1 stabilization at the outer mitochondrial membrane, kinase activation and downstream mitophagy. In terms of processing, ubiquitinated by PRKN during mitophagy, leading to its degradation and enhancement of mitophagy. Deubiquitinated by USP30. As to expression, expressed in brain, kidney, stomach, colon, jejunum, ileum, testis, ovary and oviduct (at protein level). In the brain, expressed in neural cells of the cerebrum and cerebellum (at protein level). In the kidney, expressed in the proximal to distal tubule in the cortex and the outer and inner zones of the medulla (at protein level). In the stomach, expressed in the basal layer of stratified squamous epithelia in the forestomach and in the gastric pit and fundic gland of the glandular stomach (at protein level). Expressed in epithelial cells of the jejunum, ileum, and colon (at protein level). In the testis, expressed by spermatocytes and spermatogonia (at protein level). In the ovaries, expressed by follicular epithelial cells and corpus luteum cells (at protein level). In the oviduct, expressed in the epithelia of the isthmus and the ciliated cells of the ampulla (at protein level). Expressed in the sperm midpiece (at protein level).

It is found in the mitochondrion outer membrane. Central component of the receptor complex responsible for the recognition and translocation of cytosolically synthesized mitochondrial preproteins. Together with TOM22 functions as the transit peptide receptor at the surface of the mitochondrion outer membrane and facilitates the movement of preproteins into the TOM40 translocation pore. Required for the translocation across the mitochondrial outer membrane of cytochrome P450 monooxygenases. In Mus musculus (Mouse), this protein is Mitochondrial import receptor subunit TOM20 homolog (Tomm20).